Reading from the N-terminus, the 449-residue chain is MPAQTIEELIAVIKQRDGHMTEFRQAVEEVVDSLKVIFEREPKYIPIFERMLEPERVIIFRVPWMDDAGRINVNRGFRVQYNSALGPYKGGLRFHPSVNLSILKFLGFEQILKNSLTTLPMGGGKGGSDFDPKGKSDNEVMRFCQSFMTELQRHVGADTDVPAGDIGVGAREIGYLYGQYKRLRNEFTGVLTGKNVKWGGSFIRPEATGYGAVYFLEEMCKDNNTVIRGKNVLLSGSGNVAQFACEKLIQLGAKVLTFSDSNGTIVDKDGFNEEKLAHLMYLKNEKRGRVSEFKDKYPSVAYYEGKKPWECFEGQMDCIMPCATQNEVSGDDATRLVGLGLKFVAEGANMPSTAEAVHVYHAKGVMYGPAKASNAGGVSVSGLEMSQNSVRLQWTAEEVDQKLRGIMRGIFVACRDTAKKYGHPKNYQMGANIAGFLKVADSMIEQGCV.

Residue lysine 125 is part of the active site.

The protein belongs to the Glu/Leu/Phe/Val dehydrogenases family. As to quaternary structure, homohexamer.

It catalyses the reaction L-glutamate + NADP(+) + H2O = 2-oxoglutarate + NH4(+) + NADPH + H(+). This chain is NADP-specific glutamate dehydrogenase, found in Giardia intestinalis (Giardia lamblia).